Reading from the N-terminus, the 351-residue chain is V-type proton ATPase subunit d2 (351 aa).

This sequence belongs to the V-ATPase V0D/AC39 subunit family. As to quaternary structure, V-ATPase is a heteromultimeric enzyme composed of a peripheral catalytic V1 complex (components A to H) attached to an integral membrane V0 proton pore complex (components: a, c, c'', d and e).

It is found in the vacuole membrane. In terms of biological role, subunit of the integral membrane V0 complex of vacuolar ATPase. Vacuolar ATPase is responsible for acidifying a variety of intracellular compartments in eukaryotic cells, thus providing most of the energy required for transport processes in the vacuolar system. The sequence is that of V-type proton ATPase subunit d2 (VHA-d2) from Arabidopsis thaliana (Mouse-ear cress).